A 318-amino-acid polypeptide reads, in one-letter code: Polyprenal reductase (318 aa).

Topologically, residues 1-19 (MAPWAAAQLWALNPLRALW) are cytoplasmic. Residues 20 to 40 (LTLAAAFLLTLLLQLVPPGLL) traverse the membrane as a helical segment. The Lumenal segment spans residues 41-80 (PGCALFQDLIRYGKTKREGQSRPAVCRVFDVPKRYFSHFY). Residues 81–101 (IISALWNGFLLWHLTQSVFLG) form a helical membrane-spanning segment. Residues 102-119 (VPFPNWLHGLLRILGASQ) are Cytoplasmic-facing. A helical transmembrane segment spans residues 120–140 (FQGGELALSAFLVLVFLWLHS). Topologically, residues 141–156 (LRRLFECFYVSVFSNT) are lumenal. The helical transmembrane segment at 157–177 (VIHIVQYCFGLVYYVLTGLTV) threads the bilayer. Over 178-194 (LSQVPMDGRNAYVIGKN) the chain is Cytoplasmic. A helical membrane pass occupies residues 195–215 (LLMQARWFHILGMLMFIWSSV). At 216-265 (HQYKCHVILGNLRKNKAGVVIHCNHRIPFGDWFEYVSSPNYLAELMIYIS) the chain is on the lumenal side. The chain crosses the membrane as a helical span at residues 266–286 (MAVTFGFHNLTWWLVVTYVFF). Topologically, residues 287–318 (SQALSAFLSHKFYKSKFVSYPKHRKAFLPFLF) are cytoplasmic.

Belongs to the steroid 5-alpha reductase family. Polyprenal reductase subfamily.

Its subcellular location is the endoplasmic reticulum membrane. The catalysed reaction is a di-trans,poly-cis-dolichal + NADP(+) = a di-trans,poly-cis-polyprenal + NADPH + H(+). It catalyses the reaction a 3-oxo-5alpha-steroid + NADP(+) = a 3-oxo-Delta(4)-steroid + NADPH + H(+). The enzyme catalyses androst-4-ene-3,17-dione + NADPH + H(+) = 5alpha-androstan-3,17-dione + NADP(+). It carries out the reaction 17beta-hydroxy-5alpha-androstan-3-one + NADP(+) = testosterone + NADPH + H(+). The protein operates within protein modification; protein glycosylation. Functionally, plays a key role in early steps of protein N-linked glycosylation by being involved in the conversion of polyprenol into dolichol. Acts as a polyprenal reductase that mediates the reduction of polyprenal into dolichal in a NADP-dependent mechanism. Dolichols are required for the synthesis of dolichol-linked monosaccharides and the oligosaccharide precursor used for N-glycosylation. Also able to convert testosterone (T) into 5-alpha-dihydrotestosterone (DHT). This chain is Polyprenal reductase (SRD5A3), found in Ailuropoda melanoleuca (Giant panda).